The chain runs to 468 residues: tRNA (guanine(37)-N(1))-methyltransferase 1 (468 aa).

Residues His-207, 245–246 (DL), and 273–274 (DA) each bind S-adenosyl-L-methionine. Residues 301-348 (KEAAVSRGGETNSSGEEIRESNASINEPLGANKKPSGTTKTENGVGKD) are disordered. Positions 309-325 (GETNSSGEEIRESNASI) are enriched in polar residues. Residue Asn-380 coordinates S-adenosyl-L-methionine.

The protein belongs to the class I-like SAM-binding methyltransferase superfamily. TRM5/TYW2 family. As to quaternary structure, monomer.

It is found in the mitochondrion matrix. The protein resides in the nucleus. It localises to the cytoplasm. The catalysed reaction is guanosine(37) in tRNA + S-adenosyl-L-methionine = N(1)-methylguanosine(37) in tRNA + S-adenosyl-L-homocysteine + H(+). Its function is as follows. Specifically methylates the N1 position of guanosine-37 in various cytoplasmic and mitochondrial tRNAs. Methylation is not dependent on the nature of the nucleoside 5' of the target nucleoside. This is the first step in the biosynthesis of wybutosine (yW), a modified base adjacent to the anticodon of tRNAs and required for accurate decoding. This Arabidopsis thaliana (Mouse-ear cress) protein is tRNA (guanine(37)-N(1))-methyltransferase 1.